Reading from the N-terminus, the 178-residue chain is Inorganic pyrophosphatase (178 aa).

Positions 30, 44, and 56 each coordinate substrate. Positions 66, 71, and 103 each coordinate Mg(2+). Position 140 (Tyr-140) interacts with substrate.

It belongs to the PPase family. In terms of assembly, homohexamer. It depends on Mg(2+) as a cofactor.

It localises to the cytoplasm. The enzyme catalyses diphosphate + H2O = 2 phosphate + H(+). In terms of biological role, catalyzes the hydrolysis of inorganic pyrophosphate (PPi) forming two phosphate ions. The sequence is that of Inorganic pyrophosphatase from Thermococcus kodakarensis (strain ATCC BAA-918 / JCM 12380 / KOD1) (Pyrococcus kodakaraensis (strain KOD1)).